The sequence spans 84 residues: MANIVSNEKTYRHTQKVRKENHAKMSKLRTIVKKTRSSNEQAQLNEAYKVIDTTASKGVIHKNKANRLKSRTAKAFKTNLEVTA.

The tract at residues 1 to 25 (MANIVSNEKTYRHTQKVRKENHAKM) is disordered.

This sequence belongs to the bacterial ribosomal protein bS20 family.

Its function is as follows. Binds directly to 16S ribosomal RNA. The polypeptide is Small ribosomal subunit protein bS20 (Ureaplasma parvum serovar 3 (strain ATCC 700970)).